The following is an 87-amino-acid chain: RNA-binding protein Hfq (87 aa).

Positions 9–68 constitute a Sm domain; that stretch reads DPFLNALRRERIPVSIYLVNGIKLQGQIESFDQFVILLKNTVNQMVYKHAISTVVPARPV. The tract at residues 65–87 is disordered; it reads ARPVSHHSGDRPQGDRPQEKSED. Positions 71–87 are enriched in basic and acidic residues; sequence HSGDRPQGDRPQEKSED.

This sequence belongs to the Hfq family. Homohexamer.

Functionally, RNA chaperone that binds small regulatory RNA (sRNAs) and mRNAs to facilitate mRNA translational regulation in response to envelope stress, environmental stress and changes in metabolite concentrations. Also binds with high specificity to tRNAs. In Vibrio parahaemolyticus serotype O3:K6 (strain RIMD 2210633), this protein is RNA-binding protein Hfq.